Reading from the N-terminus, the 254-residue chain is Large ribosomal subunit protein uL2B (254 aa).

Lys46 participates in a covalent cross-link: Glycyl lysine isopeptide (Lys-Gly) (interchain with G-Cter in ubiquitin). Ser52 carries the post-translational modification Phosphoserine. Lys93 participates in a covalent cross-link: Glycyl lysine isopeptide (Lys-Gly) (interchain with G-Cter in ubiquitin). Ser95 is subject to Phosphoserine. Glycyl lysine isopeptide (Lys-Gly) (interchain with G-Cter in ubiquitin) cross-links involve residues Lys119 and Lys145. Ser159, Ser160, and Ser249 each carry phosphoserine.

It belongs to the universal ribosomal protein uL2 family. As to quaternary structure, component of the large ribosomal subunit (LSU). Mature yeast ribosomes consist of a small (40S) and a large (60S) subunit. The 40S small subunit contains 1 molecule of ribosomal RNA (18S rRNA) and 33 different proteins (encoded by 57 genes). The large 60S subunit contains 3 rRNA molecules (25S, 5.8S and 5S rRNA) and 46 different proteins (encoded by 81 genes).

The protein resides in the cytoplasm. Functionally, component of the ribosome, a large ribonucleoprotein complex responsible for the synthesis of proteins in the cell. The small ribosomal subunit (SSU) binds messenger RNAs (mRNAs) and translates the encoded message by selecting cognate aminoacyl-transfer RNA (tRNA) molecules. The large subunit (LSU) contains the ribosomal catalytic site termed the peptidyl transferase center (PTC), which catalyzes the formation of peptide bonds, thereby polymerizing the amino acids delivered by tRNAs into a polypeptide chain. The nascent polypeptides leave the ribosome through a tunnel in the LSU and interact with protein factors that function in enzymatic processing, targeting, and the membrane insertion of nascent chains at the exit of the ribosomal tunnel. The sequence is that of Large ribosomal subunit protein uL2B from Saccharomyces cerevisiae (strain ATCC 204508 / S288c) (Baker's yeast).